The following is a 217-amino-acid chain: 3,4-dihydroxy-2-butanone 4-phosphate synthase (217 aa).

Residues 37–38 (RE), D42, 150–154 (RRGHT), and E174 each bind D-ribulose 5-phosphate. E38 serves as a coordination point for Mg(2+). H153 is a Mg(2+) binding site.

This sequence belongs to the DHBP synthase family. As to quaternary structure, homodimer. The cofactor is Mg(2+). Mn(2+) serves as cofactor.

It catalyses the reaction D-ribulose 5-phosphate = (2S)-2-hydroxy-3-oxobutyl phosphate + formate + H(+). It functions in the pathway cofactor biosynthesis; riboflavin biosynthesis; 2-hydroxy-3-oxobutyl phosphate from D-ribulose 5-phosphate: step 1/1. Its function is as follows. Catalyzes the conversion of D-ribulose 5-phosphate to formate and 3,4-dihydroxy-2-butanone 4-phosphate. This Aeromonas salmonicida (strain A449) protein is 3,4-dihydroxy-2-butanone 4-phosphate synthase.